Here is a 344-residue protein sequence, read N- to C-terminus: MTQSQQSHRKDEHVFLAEKYFQSVAHAGFDQVRLLHRALPETTMAAVDLKPDLPFNWQWPIYINAMTGGSPQTGKLNAQLGQLAQALGVAIASGSQSVALRDPQLVPTFATLRDHDPNGFILANVGAGHHATAAEAAVAMLKANALEIHLNAAQEVVMPEGDRDFMWQANIKSIIATSQVPIVVKEVGNGFIREDLQSLQQLGVQFVDVGGRGGTNFATIENARRSGHDFAYLQDWGQTTVESLLEARGLGLTMLATGGVRSPLDVVKALRLGAHAVGMSGMVLHHLIQTGYEATLAYFQNFLHQLRQLYALLGVTNWQELQEAPIVLSADLEHYRQARGLPGI.

A substrate-binding site is contributed by arginine 9–lysine 10. FMN contacts are provided by residues alanine 65–threonine 67, serine 95, and asparagine 124. Glutamine 154 contributes to the substrate binding site. A Mg(2+)-binding site is contributed by glutamate 155. FMN-binding positions include lysine 185, threonine 215, glycine 259–arginine 261, and serine 280–glycine 281.

The protein belongs to the IPP isomerase type 2 family. In terms of assembly, homooctamer. Dimer of tetramers. FMN is required as a cofactor. Requires NADPH as cofactor. Mg(2+) serves as cofactor.

Its subcellular location is the cytoplasm. It carries out the reaction isopentenyl diphosphate = dimethylallyl diphosphate. In terms of biological role, involved in the biosynthesis of isoprenoids. Catalyzes the 1,3-allylic rearrangement of the homoallylic substrate isopentenyl (IPP) to its allylic isomer, dimethylallyl diphosphate (DMAPP). This is Isopentenyl-diphosphate delta-isomerase from Lacticaseibacillus paracasei (strain ATCC 334 / BCRC 17002 / CCUG 31169 / CIP 107868 / KCTC 3260 / NRRL B-441) (Lactobacillus paracasei).